The primary structure comprises 122 residues: Large ribosomal subunit protein uL14 (122 aa).

This sequence belongs to the universal ribosomal protein uL14 family. Part of the 50S ribosomal subunit. Forms a cluster with proteins L3 and L19. In the 70S ribosome, L14 and L19 interact and together make contacts with the 16S rRNA in bridges B5 and B8.

Binds to 23S rRNA. Forms part of two intersubunit bridges in the 70S ribosome. This chain is Large ribosomal subunit protein uL14, found in Synechococcus sp. (strain JA-3-3Ab) (Cyanobacteria bacterium Yellowstone A-Prime).